Reading from the N-terminus, the 1148-residue chain is Pyruvate carboxylase (1148 aa).

The 457-residue stretch at 1-457 (MSQQSIQKVL…DTSFIDTTPE (457 aa)) folds into the Biotin carboxylation domain. ATP contacts are provided by lysine 121, glutamate 205, and histidine 240. The ATP-grasp domain maps to 125 to 321 (REQAEKAGIP…IVQTQILVAQ (197 aa)). Lysine 242 is an active-site residue. Residues 534-802 (VLLTDTTFRD…RPEMNVQGVE (269 aa)) form the Pyruvate carboxyltransferase domain. Substrate contacts are provided by residues 542–546 (RDAHQ) and arginine 615. An a divalent metal cation-binding site is contributed by aspartate 543. Residues lysine 712, histidine 741, and histidine 743 each contribute to the a divalent metal cation site. At lysine 712 the chain carries N6-carboxylysine. Residue threonine 876 coordinates substrate. Positions 1071–1146 (KADRTNPSHI…QTGDLLLEIE (76 aa)) constitute a Biotinyl-binding domain. Lysine 1112 carries the N6-biotinyllysine modification.

Homotetramer. At very low potassium concentrations, when intracellular levels of c-di-AMP are low, interacts with apo-DarB. c-di-AMP inhibits the binding of DarB to PYC. Does not bind directly c-di-AMP. Biotin serves as cofactor.

The enzyme catalyses hydrogencarbonate + pyruvate + ATP = oxaloacetate + ADP + phosphate + H(+). Its activity is regulated as follows. Activated by the cyclic di-AMP (c-di-AMP) receptor DarB in the absence of c-di-AMP. Allosterically activated by acetyl-CoA. Inhibited by the biotin-complexing protein avidin. Functionally, catalyzes a 2-step reaction, involving the ATP-dependent carboxylation of the covalently attached biotin in the first step and the transfer of the carboxyl group to pyruvate in the second, leading to oxaloacetate production. Fulfills an anaplerotic function in B.subtilis as it is necessary for growth on glucose, but is not required for sporulation. This chain is Pyruvate carboxylase (pyc), found in Bacillus subtilis (strain 168).